The following is a 196-amino-acid chain: SPRY domain-containing protein 7 (196 aa).

A2 bears the N-acetylalanine mark. The region spanning 2 to 184 is the B30.2/SPRY domain; it reads AASAWCCLRC…FSEFYHTPPP (183 aa).

This is SPRY domain-containing protein 7 (Spryd7) from Mus musculus (Mouse).